A 218-amino-acid chain; its full sequence is ADP-sugar pyrophosphatase (218 aa).

Methionine 1 is modified (N-acetylmethionine). Position 10 is a phosphoserine (serine 10). Position 27 (tryptophan 27) interacts with substrate. Residue lysine 41 forms a Glycyl lysine isopeptide (Lys-Gly) (interchain with G-Cter in SUMO2) linkage. Threonine 44 is subject to Phosphothreonine. Substrate-binding positions include 45 to 46 (WE) and arginine 83. In terms of domain architecture, Nudix hydrolase spans 56-196 (KSADAVSVIP…EQHLTVDAKV (141 aa)). Residue alanine 95 coordinates Mg(2+). The short motif at 96-117 (GFIEDGESPEAAALRELEEETG) is the Nudix box element. Phenylalanine 97 provides a ligand contact to substrate. Mg(2+) is bound by residues glutamate 111 and glutamate 115. Aspartate 132 provides a ligand contact to substrate. Glutamate 165 lines the Mg(2+) pocket. 2 positions are modified to N6-acetyllysine: lysine 209 and lysine 217.

This sequence belongs to the Nudix hydrolase family. As to quaternary structure, homodimer. Interacts with PARG. Mg(2+) is required as a cofactor. Post-translationally, phosphorylation at Thr-44 is required for homodimer stability; dephosphorylation results in destabilization of the homodimer. Dephosphorylation at Thr-44 promotes the ATP-synthesis activity. Widely expressed. Most abundant in liver.

It localises to the nucleus. It carries out the reaction D-ribose 5-phosphate + ATP + H(+) = ADP-D-ribose + diphosphate. The catalysed reaction is ADP-D-ribose + H2O = D-ribose 5-phosphate + AMP + 2 H(+). The enzyme catalyses 8-oxo-dGDP + H2O = 8-oxo-dGMP + phosphate + H(+). Functionally, enzyme that can either act as an ADP-sugar pyrophosphatase in absence of diphosphate or catalyze the synthesis of ATP in presence of diphosphate. In absence of diphosphate, hydrolyzes with similar activities various modified nucleoside diphosphates such as ADP-ribose, ADP-mannose, ADP-glucose, 8-oxo-GDP and 8-oxo-dGDP. Can also hydrolyze other nucleotide sugars with low activity. In presence of diphosphate, mediates the synthesis of ATP in the nucleus by catalyzing the conversion of ADP-ribose to ATP and ribose 5-phosphate. Nuclear ATP synthesis takes place when dephosphorylated at Thr-44. Nuclear ATP generation is required for extensive chromatin remodeling events that are energy-consuming. Does not play a role in U8 snoRNA decapping activity. Binds U8 snoRNA. This is ADP-sugar pyrophosphatase from Mus musculus (Mouse).